Here is a 95-residue protein sequence, read N- to C-terminus: Co-chaperonin GroES (95 aa).

It belongs to the GroES chaperonin family. In terms of assembly, heptamer of 7 subunits arranged in a ring. Interacts with the chaperonin GroEL.

It is found in the cytoplasm. Together with the chaperonin GroEL, plays an essential role in assisting protein folding. The GroEL-GroES system forms a nano-cage that allows encapsulation of the non-native substrate proteins and provides a physical environment optimized to promote and accelerate protein folding. GroES binds to the apical surface of the GroEL ring, thereby capping the opening of the GroEL channel. The chain is Co-chaperonin GroES from Ruegeria pomeroyi (strain ATCC 700808 / DSM 15171 / DSS-3) (Silicibacter pomeroyi).